A 393-amino-acid polypeptide reads, in one-letter code: Probable xylan O-acetyltransferase 11 (393 aa).

At 1 to 9 the chain is on the cytoplasmic side; that stretch reads MHQPAIMQR. The helical; Signal-anchor for type II membrane protein transmembrane segment at 10–26 threads the bilayer; the sequence is ALAVVALLAAAAAIAAA. Residues 27-393 are Lumenal-facing; that stretch reads QGESPELLPF…LFFPARDEAI (367 aa). Disulfide bonds link Cys45-Cys96, Cys67-Cys132, Cys76-Cys368, and Cys283-Cys364. N-linked (GlcNAc...) asparagine glycosylation is present at Asn102. The GDS motif signature appears at 119-121; it reads GDS. The active-site Nucleophile is the Ser121. A glycan (N-linked (GlcNAc...) asparagine) is linked at Asn325. Residue Asp363 is the Proton donor of the active site. The DXXH motif motif lies at 363–366; it reads DCTH. Residue His366 is the Proton acceptor of the active site.

It belongs to the PC-esterase family. TBL subfamily. Expressed in roots, leaves and stems.

The protein localises to the golgi apparatus membrane. Its function is as follows. Probable xylan acetyltransferase required for 2-O- and 3-O-monoacetylation of xylosyl residues in xylan. Possesses extremely low activity in vitro. The polypeptide is Probable xylan O-acetyltransferase 11 (Oryza sativa subsp. japonica (Rice)).